Consider the following 276-residue polypeptide: 2-dehydro-3-deoxyphosphooctonate aldolase (276 aa).

This sequence belongs to the KdsA family.

Its subcellular location is the cytoplasm. The enzyme catalyses D-arabinose 5-phosphate + phosphoenolpyruvate + H2O = 3-deoxy-alpha-D-manno-2-octulosonate-8-phosphate + phosphate. Its pathway is carbohydrate biosynthesis; 3-deoxy-D-manno-octulosonate biosynthesis; 3-deoxy-D-manno-octulosonate from D-ribulose 5-phosphate: step 2/3. It participates in bacterial outer membrane biogenesis; lipopolysaccharide biosynthesis. The sequence is that of 2-dehydro-3-deoxyphosphooctonate aldolase from Helicobacter acinonychis (strain Sheeba).